We begin with the raw amino-acid sequence, 193 residues long: SCO1 protein homolog (193 aa).

The N-terminal stretch at 1-18 (MKVIKGLTAGLIFLFLCA) is a signal peptide. The N-palmitoyl cysteine moiety is linked to residue cysteine 19. Cysteine 19 carries the S-diacylglycerol cysteine lipid modification. The Thioredoxin domain maps to 26 to 191 (DPLNYEVEPF…IISDVKSAST (166 aa)). Cu cation is bound by residues cysteine 64, cysteine 68, and histidine 154.

Belongs to the SCO1/2 family. Monomer.

It is found in the cell membrane. In terms of biological role, necessary for insertion of copper into the active site of cytochrome c oxidase. May play a role in copper homeostasis or redox signaling. This chain is SCO1 protein homolog (ypmQ), found in Bacillus subtilis (strain 168).